The chain runs to 259 residues: Phosphate import ATP-binding protein PstB (259 aa).

Residues 11 to 254 (AEARNLNFYY…PQDKRTEDYI (244 aa)) enclose the ABC transporter domain. Residue 43–50 (GPSGCGKS) coordinates ATP.

Belongs to the ABC transporter superfamily. Phosphate importer (TC 3.A.1.7) family. The complex is composed of two ATP-binding proteins (PstB), two transmembrane proteins (PstC and PstA) and a solute-binding protein (PstS).

It localises to the cell inner membrane. The enzyme catalyses phosphate(out) + ATP + H2O = ADP + 2 phosphate(in) + H(+). Part of the ABC transporter complex PstSACB involved in phosphate import. Responsible for energy coupling to the transport system. In Dechloromonas aromatica (strain RCB), this protein is Phosphate import ATP-binding protein PstB.